The following is a 268-amino-acid chain: Tryptophan synthase alpha chain (268 aa).

Catalysis depends on proton acceptor residues glutamate 49 and aspartate 60.

This sequence belongs to the TrpA family. Tetramer of two alpha and two beta chains.

It carries out the reaction (1S,2R)-1-C-(indol-3-yl)glycerol 3-phosphate + L-serine = D-glyceraldehyde 3-phosphate + L-tryptophan + H2O. It participates in amino-acid biosynthesis; L-tryptophan biosynthesis; L-tryptophan from chorismate: step 5/5. The alpha subunit is responsible for the aldol cleavage of indoleglycerol phosphate to indole and glyceraldehyde 3-phosphate. The sequence is that of Tryptophan synthase alpha chain from Escherichia coli O127:H6 (strain E2348/69 / EPEC).